A 298-amino-acid chain; its full sequence is MTPLDKGLDKARVLIEALPYIQKFAGKTVVIKYGGHAMLEQDLKEKVMLDILLLHSVGIRPVVVHGGGPEINSMLTRVGKESHFVRGLRVTDKETMEIASMVLVGKLNTEIISLLNRFGGRAVGLSGKDAQLLQAVKKPMQFQNSQGELEDVDLGFVGEIEQIRPEIVTSLVEQGYIPVISPVAGGEDGESYNINADTAAGEIAKALKADKFLLLTDVPGVLRDVEDKDSLLSVIKEDEISGLIDLGVISGGMIPKVECARAALQGGVGSVHILDGRIPHAILLELFTDGGIGTMFNA.

Substrate-binding positions include 67–68 (GG), R89, and N193.

The protein belongs to the acetylglutamate kinase family. ArgB subfamily.

The protein resides in the cytoplasm. The enzyme catalyses N-acetyl-L-glutamate + ATP = N-acetyl-L-glutamyl 5-phosphate + ADP. It participates in amino-acid biosynthesis; L-arginine biosynthesis; N(2)-acetyl-L-ornithine from L-glutamate: step 2/4. Functionally, catalyzes the ATP-dependent phosphorylation of N-acetyl-L-glutamate. This Desulfitobacterium hafniense (strain DSM 10664 / DCB-2) protein is Acetylglutamate kinase.